Reading from the N-terminus, the 502-residue chain is ATP synthase subunit alpha (502 aa).

169–176 (GDRQTGKT) is an ATP binding site.

This sequence belongs to the ATPase alpha/beta chains family. In terms of assembly, F-type ATPases have 2 components, CF(1) - the catalytic core - and CF(0) - the membrane proton channel. CF(1) has five subunits: alpha(3), beta(3), gamma(1), delta(1), epsilon(1). CF(0) has three main subunits: a(1), b(2) and c(9-12). The alpha and beta chains form an alternating ring which encloses part of the gamma chain. CF(1) is attached to CF(0) by a central stalk formed by the gamma and epsilon chains, while a peripheral stalk is formed by the delta and b chains.

Its subcellular location is the cell membrane. The catalysed reaction is ATP + H2O + 4 H(+)(in) = ADP + phosphate + 5 H(+)(out). Its function is as follows. Produces ATP from ADP in the presence of a proton gradient across the membrane. The alpha chain is a regulatory subunit. The chain is ATP synthase subunit alpha from Priestia megaterium (strain ATCC 12872 / QMB1551) (Bacillus megaterium).